A 276-amino-acid chain; its full sequence is S-adenosylmethionine decarboxylase proenzyme (276 aa).

The active-site Schiff-base intermediate with substrate; via pyruvic acid is S126. At S126 the chain carries Pyruvic acid (Ser); by autocatalysis. H131 serves as the catalytic Proton acceptor; for processing activity. C154 functions as the Proton donor; for catalytic activity in the catalytic mechanism.

This sequence belongs to the prokaryotic AdoMetDC family. Type 2 subfamily. Heterooctamer of four alpha and four beta chains arranged as a tetramer of alpha/beta heterodimers. Requires pyruvate as cofactor. Post-translationally, is synthesized initially as an inactive proenzyme. Formation of the active enzyme involves a self-maturation process in which the active site pyruvoyl group is generated from an internal serine residue via an autocatalytic post-translational modification. Two non-identical subunits are generated from the proenzyme in this reaction, and the pyruvate is formed at the N-terminus of the alpha chain, which is derived from the carboxyl end of the proenzyme. The post-translation cleavage follows an unusual pathway, termed non-hydrolytic serinolysis, in which the side chain hydroxyl group of the serine supplies its oxygen atom to form the C-terminus of the beta chain, while the remainder of the serine residue undergoes an oxidative deamination to produce ammonia and the pyruvoyl group blocking the N-terminus of the alpha chain.

It carries out the reaction S-adenosyl-L-methionine + H(+) = S-adenosyl 3-(methylsulfanyl)propylamine + CO2. It participates in amine and polyamine biosynthesis; S-adenosylmethioninamine biosynthesis; S-adenosylmethioninamine from S-adenosyl-L-methionine: step 1/1. Catalyzes the decarboxylation of S-adenosylmethionine to S-adenosylmethioninamine (dcAdoMet), the propylamine donor required for the synthesis of the polyamines spermine and spermidine from the diamine putrescine. This chain is S-adenosylmethionine decarboxylase proenzyme, found in Alcanivorax borkumensis (strain ATCC 700651 / DSM 11573 / NCIMB 13689 / SK2).